The primary structure comprises 160 residues: 2-C-methyl-D-erythritol 2,4-cyclodiphosphate synthase (160 aa).

D9 and H11 together coordinate a divalent metal cation. 4-CDP-2-C-methyl-D-erythritol 2-phosphate contacts are provided by residues 9-11 and 35-36; these read DVH and HS. Position 43 (H43) interacts with a divalent metal cation. 4-CDP-2-C-methyl-D-erythritol 2-phosphate is bound by residues 57–59, 62–66, 101–107, 133–136, F140, and R143; these read DIG, FPDTD, AQKPKMA, and TTTE.

The protein belongs to the IspF family. In terms of assembly, homotrimer. The cofactor is a divalent metal cation.

The enzyme catalyses 4-CDP-2-C-methyl-D-erythritol 2-phosphate = 2-C-methyl-D-erythritol 2,4-cyclic diphosphate + CMP. Its pathway is isoprenoid biosynthesis; isopentenyl diphosphate biosynthesis via DXP pathway; isopentenyl diphosphate from 1-deoxy-D-xylulose 5-phosphate: step 4/6. Its function is as follows. Involved in the biosynthesis of isopentenyl diphosphate (IPP) and dimethylallyl diphosphate (DMAPP), two major building blocks of isoprenoid compounds. Catalyzes the conversion of 4-diphosphocytidyl-2-C-methyl-D-erythritol 2-phosphate (CDP-ME2P) to 2-C-methyl-D-erythritol 2,4-cyclodiphosphate (ME-CPP) with a corresponding release of cytidine 5-monophosphate (CMP). The protein is 2-C-methyl-D-erythritol 2,4-cyclodiphosphate synthase of Geobacillus thermodenitrificans (strain NG80-2).